Here is a 239-residue protein sequence, read N- to C-terminus: Carboxy-S-adenosyl-L-methionine synthase (239 aa).

Residues Tyr35, 64 to 66 (GCS), 88 to 89 (DN), and Arg195 each bind S-adenosyl-L-methionine.

This sequence belongs to the class I-like SAM-binding methyltransferase superfamily. Cx-SAM synthase family. As to quaternary structure, homodimer.

The catalysed reaction is prephenate + S-adenosyl-L-methionine = carboxy-S-adenosyl-L-methionine + 3-phenylpyruvate + H2O. Catalyzes the conversion of S-adenosyl-L-methionine (SAM) to carboxy-S-adenosyl-L-methionine (Cx-SAM). In Helicobacter pylori (strain HPAG1), this protein is Carboxy-S-adenosyl-L-methionine synthase.